The primary structure comprises 180 residues: MAKIGLFFGSNTGKTRKVAKSIKKRFDDETMSDAVNVNRVSAEDFAQYQFLILGTPTLGEGELPGLSSDCENESWEEFLPKIEGLDFSGKTVALFGLGDQVGYPENFLDAMGELHSFFTERGAKVVGAWSTDGYEFEGSTAVVDGKFVGLALDLDNQSGKTDERVAAWLAQIAPEFGLSL.

A Flavodoxin-like domain is found at Ile-4–Ala-173.

It belongs to the flavodoxin family. FMN serves as cofactor.

In terms of biological role, low-potential electron donor to a number of redox enzymes. NifF is the electron donor to nitrogenase. The polypeptide is Flavodoxin B (nifF) (Azotobacter chroococcum mcd 1).